The primary structure comprises 493 residues: MTPARRSALSLALLLVALASDLAAGLKCVCLLCDSSNFTCQTEGACWASVMLTNGKEQVSKSCVSLPELNAQVFCHSSNNVTKTECCFTDFCNNITQHLPTASPDAPRLGPTELTVVITVPVCLLSIAAMLTIWACQDRQCTYRKTKRHNVEEPLAEYSLVNAGKTLKDLIYDATASGSGSGPPLLVQRTIARTIVLQEIVGKGRFGEVWHGRWCGEDVAVKIFSSRDERSWFREAEIYQTVMLRHENILGFIAADNKDNGTWTQLWLVSEYHEQGSLYDYLNRNIVTVAGMVKLALSIASGLAHLHMEIVGTQGKPAIAHRDIKSKNILVKKCDTCAIADLGLAVKHDSIMNTIDIPQNPKVGTKRYMAPEMLDDTMNVNIFESFKRADIYSVGLVYWEIARRCSVGGLVEEYQLPYYDMVPSDPSIEEMRKVVCDQKLRPNLPNQWQSCEALRVMGRIMRECWYANGAARLTALRVKKTISQLCVKEDCKA.

An N-terminal signal peptide occupies residues Met1–Gly25. Topologically, residues Leu26 to Glu113 are extracellular. The chain crosses the membrane as a helical span at residues Leu114–Trp134. The Cytoplasmic segment spans residues Ala135–Ala493. The GS domain occupies Lys165 to Thr194. One can recognise a Protein kinase domain in the interval Ile195–Leu485. ATP contacts are provided by residues Val201 to Val209 and Lys222. Asp323 acts as the Proton acceptor in catalysis.

It belongs to the protein kinase superfamily. TKL Ser/Thr protein kinase family. TGFB receptor subfamily. In terms of assembly, binds the type 2 receptor protein ACVR2A. The cofactor is Mg(2+). It depends on Mn(2+) as a cofactor. Expressed in brain, kidney, lung, liver, testis, ovary, adrenal gland, heart, prostate, gastrointestinal tract, and spleen. Distributed throughout both adult and embryonic central nervous system and pancreatic islet cells.

The protein resides in the membrane. It catalyses the reaction L-threonyl-[receptor-protein] + ATP = O-phospho-L-threonyl-[receptor-protein] + ADP + H(+). It carries out the reaction L-seryl-[receptor-protein] + ATP = O-phospho-L-seryl-[receptor-protein] + ADP + H(+). Its function is as follows. Serine/threonine protein kinase which forms a receptor complex on ligand binding. The receptor complex consists of 2 type II and 2 type I transmembrane serine/threonine kinases. Type II receptors phosphorylate and activate type I receptors which autophosphorylate, then bind and activate SMAD transcriptional regulators, SMAD2 and SMAD3. Receptor for activin AB, activin B, activin E and NODAL. Upon NODAL binding, activation results in increased apoptosis and reduced proliferation through suppression of AKT signaling and the activation of Smad2-dependent signaling pathway in pancreatic beta-cells, trophoblasts, epithelial or neuronal cells. Acts as a positive regulator for macrophage activation partially through down-regulation of PPARG expression. This is Activin receptor type-1C from Rattus norvegicus (Rat).